A 194-amino-acid polypeptide reads, in one-letter code: Probable thymidylate kinase (194 aa).

An ATP-binding site is contributed by Gly-7–Thr-14.

The protein belongs to the thymidylate kinase family.

The catalysed reaction is dTMP + ATP = dTDP + ADP. The sequence is that of Probable thymidylate kinase (tmk) from Methanothermobacter thermautotrophicus (strain ATCC 29096 / DSM 1053 / JCM 10044 / NBRC 100330 / Delta H) (Methanobacterium thermoautotrophicum).